Here is a 546-residue protein sequence, read N- to C-terminus: MLSTVQNPRFLLRQCRHFPPKRRRFHSSTPLFLSQPQTLASTDPPSSPPQSQILTIRDNLINRRTTAVELAQLSLNRLRLTEPQINSFISVSETVLREAEEIDAKIARNEELGPLAGVFVGVKDNICTADMPSTGGSRILENYRPPFDATAVKRVKDCGGIVVGKTNLDEFGMGSTTEGSAFQVTANPWDVSRVPGGSSGGSAAAVSARQCVVSLGSDTGGSVRQPASFCGVVGLKPTYGRVSRFGLMAYASSLDVIGCFGSSVADTGILLHAIAGYDGLDSTSSKHEVPNYTSQFMSISSLESKPLKGLRVGLIRETLDDGVDKAVVSSIVGAASHLEELGCTVTEVSLPSFSLGLPAYYILASSESSSNLSRYDGVRYGSQVGADRLNSLYGDSRAKGFGPEVKMRILTGTYALSAGYYDAYYKRAQQVRTLVQKSFKAALNENDILISPAAPSPAYSIGEKKNDPLAMYAGDIMTVNVNLAGLPALVLPCGFVEGGPAGLPVGLQMIGAAFDEEKLLKVGHIFEQMLKGYKFIPPLLADGIAC.

Residues 21-52 (KRRRFHSSTPLFLSQPQTLASTDPPSSPPQSQ) are disordered. Over residues 27-43 (SSTPLFLSQPQTLASTD) the composition is skewed to polar residues. Active-site charge relay system residues include Lys-123 and Ser-198. The Acyl-ester intermediate role is filled by Ser-222.

Belongs to the amidase family. GatA subfamily. In terms of assembly, subunit of the heterotrimeric GatCAB amidotransferase (AdT) complex, composed of A, B and C subunits.

It localises to the mitochondrion. It is found in the plastid. The protein localises to the chloroplast stroma. It catalyses the reaction L-glutamyl-tRNA(Gln) + L-glutamine + ATP + H2O = L-glutaminyl-tRNA(Gln) + L-glutamate + ADP + phosphate + H(+). Its function is as follows. Allows the formation of correctly charged Gln-tRNA(Gln) through the transamidation of misacylated Glu-tRNA(Gln) in chloroplasts and mitochondria. The reaction takes place in the presence of glutamine and ATP through an activated gamma-phospho-Glu-tRNA(Gln). This is Glutamyl-tRNA(Gln) amidotransferase subunit A, chloroplastic/mitochondrial from Vitis vinifera (Grape).